The primary structure comprises 147 residues: Transcriptional repressor NrdR (147 aa).

A zinc finger spans residues 3-34 (CPFCGHLETQVVETRVSEDADFVRRRRQCSAC). Residues 49 to 139 (PVVVKKDGSR…VYRSFEDVDE (91 aa)) enclose the ATP-cone domain.

The protein belongs to the NrdR family. Requires Zn(2+) as cofactor.

Functionally, negatively regulates transcription of bacterial ribonucleotide reductase nrd genes and operons by binding to NrdR-boxes. This Variovorax paradoxus (strain S110) protein is Transcriptional repressor NrdR.